Here is a 114-residue protein sequence, read N- to C-terminus: MARGGFPGMGGGMNINNLMKQAQKMQQQMQKVQGELEEKEFVASAGGGAVTVKANGKKEILSINIEPDVVDPDDVEMLQDLILAACNQALKTADEETANEMKKLTGGLNMPGMF.

It belongs to the YbaB/EbfC family. Homodimer.

The protein localises to the cytoplasm. It is found in the nucleoid. In terms of biological role, binds to DNA and alters its conformation. May be involved in regulation of gene expression, nucleoid organization and DNA protection. This Clostridium novyi (strain NT) protein is Nucleoid-associated protein NT01CX_0824.